Reading from the N-terminus, the 367-residue chain is Glycolate oxidase 3 (367 aa).

Residues M1–D360 enclose the FMN hydroxy acid dehydrogenase domain. Y25 contacts glyoxylate. FMN-binding positions include P78–A80, S107, Q128–Y130, and T156. Glyoxylate is bound at residue Y130. A glyoxylate-binding site is contributed by R165. FMN is bound by residues K231 and S253. Glyoxylate contacts are provided by H255 and R258. Catalysis depends on H255, which acts as the Proton acceptor. Residues D286–R290 and G309–R310 each bind FMN. The Microbody targeting signal signature appears at S365–L367.

Belongs to the FMN-dependent alpha-hydroxy acid dehydrogenase family. Homotetramer. The cofactor is FMN.

It localises to the peroxisome. It carries out the reaction glycolate + O2 = glyoxylate + H2O2. Its pathway is photosynthesis; photorespiration; glycine from 2-phosphoglycolate: step 2/3. Its function is as follows. Catalyzes the oxidation of glycolate to glyoxylate, with a reduction of O2 to H2O2. Is a key enzyme in photorespiration in green plants. This chain is Glycolate oxidase 3 (GLO3), found in Oryza sativa subsp. indica (Rice).